Here is a 293-residue protein sequence, read N- to C-terminus: AA9 family lytic polysaccharide monooxygenase E (293 aa).

The N-terminal stretch at 1–19 (MKGLLSVAALSLAVSEVSA) is a signal peptide. Positions 20 and 90 each coordinate Cu(2+). A disulfide bond links cysteine 59 and cysteine 172. O2 contacts are provided by histidine 158 and glutamine 167. Tyrosine 169 contributes to the Cu(2+) binding site. The 37-residue stretch at 257 to 293 (CAVAKWGQCGGNGWTGCTTCAAGSTCNTQNAYYHQCV) folds into the CBM1 domain.

Belongs to the polysaccharide monooxygenase AA9 family. It depends on Cu(2+) as a cofactor.

Its subcellular location is the secreted. It catalyses the reaction [(1-&gt;4)-beta-D-glucosyl]n+m + reduced acceptor + O2 = 4-dehydro-beta-D-glucosyl-[(1-&gt;4)-beta-D-glucosyl]n-1 + [(1-&gt;4)-beta-D-glucosyl]m + acceptor + H2O.. With respect to regulation, glucose dehydrogenase and aryl-alcohol quinone oxidoreductases regulate the oxidative degradation of cellulose since they can act as catalytically efficient electron donors for LPMO9E. Functionally, lytic polysaccharide monooxygenase (LPMO) that depolymerizes crystalline and amorphous polysaccharides via the oxidation of scissile alpha- or beta-(1-4)-glycosidic bonds, yielding only C1 oxidation products. Catalysis by LPMOs requires the reduction of the active-site copper from Cu(II) to Cu(I) by a reducing agent and H(2)O(2) or O(2) as a cosubstrate. Improves the progression of lytic enzymes in delignified miscanthus cell walls. This boosting effect dependents on the cellular type which indicates contrasted recalcitrance levels in plant tissues. In Podospora anserina (strain S / ATCC MYA-4624 / DSM 980 / FGSC 10383) (Pleurage anserina), this protein is AA9 family lytic polysaccharide monooxygenase E.